The sequence spans 224 residues: MKAYKKEFINFMIECGVLTFGDFVTKSGRKTPFFVNTGNYQTGSQLRRLGEFYAEAIKENFADDYDVLFGPAYKGIPLSVTTSIALSSSFDIDVRYCSNRKEVKDHGDTGILLGSKLNDGDKVLIVEDVTTAGTSIYETMPILKSQADVNVKGLIISVDRMERGQGEQSALTEIREKFGFKTCAIVTMAEVIEYLYNKEINGTILITDEVKGRIDEYYKQYGAK.

Residues lysine 26, tyrosine 73–lysine 74, arginine 100, lysine 101, lysine 104, histidine 106, and glutamate 127–serine 135 each bind 5-phospho-alpha-D-ribose 1-diphosphate. Residues threonine 131 and arginine 160 each contribute to the orotate site.

The protein belongs to the purine/pyrimidine phosphoribosyltransferase family. PyrE subfamily. In terms of assembly, homodimer. Requires Mg(2+) as cofactor.

It carries out the reaction orotidine 5'-phosphate + diphosphate = orotate + 5-phospho-alpha-D-ribose 1-diphosphate. The protein operates within pyrimidine metabolism; UMP biosynthesis via de novo pathway; UMP from orotate: step 1/2. Its function is as follows. Catalyzes the transfer of a ribosyl phosphate group from 5-phosphoribose 1-diphosphate to orotate, leading to the formation of orotidine monophosphate (OMP). The sequence is that of Orotate phosphoribosyltransferase from Clostridium beijerinckii (strain ATCC 51743 / NCIMB 8052) (Clostridium acetobutylicum).